The chain runs to 282 residues: MTSKEDGKAAPGEERRRSPLDHLPPPANSNKPLTPFSIEDILNKPSVRRSYSLCGAAHLLAAADKHAPGGLPLAGRALLSQTSPLCALEELASKTFKGLEVSVLQAAEGRDGMTIFGQRQTPKKRRKSRTAFTNHQIYELEKRFLYQKYLSPADRDQIAQQLGLTNAQVITWFQNRRAKLKRDLEEMKADVESAKKLGPSGQMDIVALAELEQNSEASGGGGGGGCGRAKSRPGSPALPPGAPQAPGGGPLQLSPASPLTDQRASSQDCSEDEEDEEIDVDD.

The span at 1-20 shows a compositional bias: basic and acidic residues; sequence MTSKEDGKAAPGEERRRSPL. The interval 1 to 36 is disordered; it reads MTSKEDGKAAPGEERRRSPLDHLPPPANSNKPLTPF. The homeobox DNA-binding region spans 125 to 184; the sequence is RRKSRTAFTNHQIYELEKRFLYQKYLSPADRDQIAQQLGLTNAQVITWFQNRRAKLKRDL. Residues 210-282 are disordered; it reads ELEQNSEASG…EEDEEIDVDD (73 aa). Gly residues predominate over residues 218–227; it reads SGGGGGGGCG. A compositionally biased stretch (acidic residues) spans 269–282; it reads CSEDEEDEEIDVDD.

As to quaternary structure, interacts with SKOR1 which acts as a transcriptional corepressor. As to expression, expressed in the dorsal part of the spinal cord and hindbrain and in presumptive myogenic cells in lateral regions of differentiating somites.

The protein resides in the nucleus. Its function is as follows. Transcription factor required for the development of GABAergic interneurons in the dorsal horn of the spinal cord and migration and further development of hypaxial muscle precursor cells for limb muscles, diaphragm and hypoglossal cord. The chain is Transcription factor LBX1 (Lbx1) from Mus musculus (Mouse).